The sequence spans 146 residues: UPF0260 protein Ssed_2516 (146 aa).

Belongs to the UPF0260 family.

This chain is UPF0260 protein Ssed_2516, found in Shewanella sediminis (strain HAW-EB3).